A 296-amino-acid polypeptide reads, in one-letter code: Small ribosomal subunit protein uS2 (296 aa).

The segment at 246–272 (QAKDGSVVDSGKGKSIAAHKGGGKASK) is disordered.

This sequence belongs to the universal ribosomal protein uS2 family.

In Anaplasma phagocytophilum (strain HZ), this protein is Small ribosomal subunit protein uS2.